The primary structure comprises 154 residues: Aspartate carbamoyltransferase regulatory chain (154 aa).

Zn(2+)-binding residues include cysteine 109, cysteine 114, cysteine 138, and cysteine 141.

It belongs to the PyrI family. As to quaternary structure, contains catalytic and regulatory chains. The cofactor is Zn(2+).

Involved in allosteric regulation of aspartate carbamoyltransferase. In Serratia proteamaculans (strain 568), this protein is Aspartate carbamoyltransferase regulatory chain.